The chain runs to 495 residues: Carbohydrate oxidase (495 aa).

An N-terminal signal peptide occupies residues 1 to 22; the sequence is MRSAFILALGLITASADALVTR. Residues 55–229 enclose the FAD-binding PCMH-type domain; sequence LPYIPTAIAQ…AVWKLATFPA (175 aa). A cross-link (6-(S-cysteinyl)-8alpha-(pros-histidyl)-FAD (His-Cys)) is located at residues 92–154; sequence HSYASFGFGG…YGRAISHGTC (63 aa). N-linked (GlcNAc...) asparagine glycans are attached at residues Asn-244 and Asn-417.

This sequence belongs to the oxygen-dependent FAD-linked oxidoreductase family. It depends on FAD as a cofactor. Post-translationally, the FAD cofactor is bound via a bicovalent 6-S-cysteinyl, 8alpha-N1-histidyl FAD linkage.

The protein resides in the secreted. The enzyme catalyses beta-D-glucose + O2 = D-glucono-1,5-lactone + H2O2. It carries out the reaction D-galactose + O2 = D-galactono-1,5-lactone + H2O2. It catalyses the reaction D-cellobiose + O2 = D-cellobiono-1,5-lactone + H2O2. The catalysed reaction is beta-lactose + O2 = lactobiono-1,5-lactone + H2O2. The enzyme catalyses D-maltose + O2 = D-maltobiono-1,5-lactone + H2O2. It carries out the reaction D-xylose + O2 = D-xylono-1,5-lactone + H2O2. In terms of biological role, catalyzes the selective oxidation of C1 hydroxyl moieties on mono-, oligo- and polysaccharides with concomitant reduction of molecular oxygen to hydrogen peroxide. This results in the formation of the corresponding lactones, which typically undergo spontaneous hydrolysis. Carbohydrate oxidase is able to oxidize a variety of substrates including D-glucose, D-galactose, D-xylose, D-maltose, D-cellobiose, and lactose. In addition, among various oligosaccharides, the enzyme preferred tetrameric dextrins, indicating a favorable interaction of four linked glucose units with the substrate binding pocket. The protein is Carbohydrate oxidase of Microdochium nivale (Pink snow mold).